The following is a 156-amino-acid chain: MKCPKCNSTQSKVVDSRHADELNAIRRRRECENCGTRFTTFEHIEVSQLIVVKKDGTREQFSREKILNGLVRSCEKRPVRYQQLEDITNKVEWQLRDEGHTEVSSRDIGEHVMNLLMHVDQVSYVRFASVYKEFKDVDQLLASMQGILSENKRSDA.

A zinc finger spans residues 3–34 (CPKCNSTQSKVVDSRHADELNAIRRRRECENC). The ATP-cone domain maps to 49 to 139 (LIVVKKDGTR…VYKEFKDVDQ (91 aa)).

This sequence belongs to the NrdR family. Zn(2+) is required as a cofactor.

Functionally, negatively regulates transcription of bacterial ribonucleotide reductase nrd genes and operons by binding to NrdR-boxes. The polypeptide is Transcriptional repressor NrdR (Staphylococcus aureus (strain NCTC 8325 / PS 47)).